We begin with the raw amino-acid sequence, 251 residues long: Triosephosphate isomerase (251 aa).

9–11 (NWK) lines the substrate pocket. His95 (electrophile) is an active-site residue. The active-site Proton acceptor is Glu167. Residues Gly173, Ser213, and 234-235 (GG) each bind substrate.

It belongs to the triosephosphate isomerase family. In terms of assembly, homodimer.

It localises to the cytoplasm. The enzyme catalyses D-glyceraldehyde 3-phosphate = dihydroxyacetone phosphate. It participates in carbohydrate biosynthesis; gluconeogenesis. It functions in the pathway carbohydrate degradation; glycolysis; D-glyceraldehyde 3-phosphate from glycerone phosphate: step 1/1. In terms of biological role, involved in the gluconeogenesis. Catalyzes stereospecifically the conversion of dihydroxyacetone phosphate (DHAP) to D-glyceraldehyde-3-phosphate (G3P). This is Triosephosphate isomerase from Citrifermentans bemidjiense (strain ATCC BAA-1014 / DSM 16622 / JCM 12645 / Bem) (Geobacter bemidjiensis).